Here is a 388-residue protein sequence, read N- to C-terminus: Na(+)/H(+) antiporter NhaA (388 aa).

The next 11 helical transmembrane spans lie at 14 to 34 (GGII…MGAT), 59 to 79 (MLLW…GLEV), 95 to 115 (VFPV…YLAF), 125 to 145 (GWAI…ALLG), 154 to 174 (IFLM…IALF), 179 to 199 (LSIV…LLNL), 219 to 239 (VLKS…FIPL), 254 to 274 (ILHP…NAGV), 292 to 312 (IIAG…WLAL), 328 to 348 (IMAV…IASL), and 356 to 376 (ALIN…AVVG).

The protein belongs to the NhaA Na(+)/H(+) (TC 2.A.33) antiporter family.

It is found in the cell inner membrane. It carries out the reaction Na(+)(in) + 2 H(+)(out) = Na(+)(out) + 2 H(+)(in). Its function is as follows. Na(+)/H(+) antiporter that extrudes sodium in exchange for external protons. This is Na(+)/H(+) antiporter NhaA from Salmonella arizonae (strain ATCC BAA-731 / CDC346-86 / RSK2980).